The following is a 235-amino-acid chain: Ribonuclease 3 (235 aa).

The RNase III domain occupies 6-131 (IDQLFKLTGH…LIAVMYLDGG (126 aa)). Glu44 serves as a coordination point for Mg(2+). Asp48 is a catalytic residue. Residues Asp117 and Glu120 each contribute to the Mg(2+) site. Glu120 is a catalytic residue. Positions 156–225 (DAKTELQEWA…AEKILRREGV (70 aa)) constitute a DRBM domain.

The protein belongs to the ribonuclease III family. Homodimer. Mg(2+) is required as a cofactor.

It localises to the cytoplasm. It catalyses the reaction Endonucleolytic cleavage to 5'-phosphomonoester.. In terms of biological role, digests double-stranded RNA. Involved in the processing of primary rRNA transcript to yield the immediate precursors to the large and small rRNAs (23S and 16S). Processes some mRNAs, and tRNAs when they are encoded in the rRNA operon. Processes pre-crRNA and tracrRNA of type II CRISPR loci if present in the organism. The sequence is that of Ribonuclease 3 from Bartonella tribocorum (strain CIP 105476 / IBS 506).